Reading from the N-terminus, the 182-residue chain is Photosystem I assembly protein Ycf4 (182 aa).

Helical transmembrane passes span 22–42 (WAII…SSYL) and 66–86 (FYGI…LFSV).

Belongs to the Ycf4 family.

It localises to the plastid. The protein localises to the chloroplast thylakoid membrane. Functionally, seems to be required for the assembly of the photosystem I complex. The protein is Photosystem I assembly protein Ycf4 of Tupiella akineta (Green alga).